Here is a 632-residue protein sequence, read N- to C-terminus: Cell pattern formation-associated protein stuA (632 aa).

The segment covering 1–20 has biased composition (polar residues); that stretch reads MNQTQSYMDVHTSHFSSPQP. Residues 1–27 are disordered; sequence MNQTQSYMDVHTSHFSSPQPYGSHGAT. The region spanning 128–234 is the HTH APSES-type domain; it reads RVTATLWEDE…HNIGGLLYHP (107 aa). The segment at residues 162-183 is a DNA-binding region (H-T-H motif); the sequence is GTKLLNVAGMTRGRRDGILKSE. Disordered stretches follow at residues 246–315, 340–386, 403–460, and 473–632; these read DSQQ…ASSL, QNVP…KSYY, AHSL…QQEP, and NRNS…MRRR. Composition is skewed to polar residues over residues 254 to 264, 275 to 295, 340 to 354, and 364 to 376; these read GSQTARTSQGP, MNGSVPSHMPQASASTPQTNG, QNVPIDNGLNSTRSM, and GNNLQGMPPYQNQ. Residues 377-386 show a composition bias toward low complexity; it reads PAYDSSKSYY. Residues 428 to 438 are compositionally biased toward basic and acidic residues; it reads EQEHDEVKVDR. Polar residues predominate over residues 473 to 506; sequence NRNSYTYTTNPSVSSLSGDHSQLGGSPSHQNGSD. The segment covering 558–576 has biased composition (low complexity); that stretch reads AYASNYSGYSSVNGSSMGS. The interval 578–604 is nuclear localization domain; the sequence is KRMRDDDDDHLSRSDGRENEYETKRRK. Residues 579–600 are compositionally biased toward basic and acidic residues; the sequence is RMRDDDDDHLSRSDGRENEYET.

Belongs to the EFG1/PHD1/stuA family.

The protein resides in the nucleus. In terms of biological role, transcription factor that regulates asexual reproduction. Binds the StuA-response elements (StRE) with the consensus sequence 5'-(A/T)CGCG(T/A)N(A/C)-3' at the promoters of target genes. Required for accurate spatial organization of the developing conidiophore. Primarily involved in the formation of the uninucleate sterigmata, which arise by budding in this multicellular structure. Required for metula and phialide formation during conidiation but is not required for dimorphic growth. The polypeptide is Cell pattern formation-associated protein stuA (Talaromyces marneffei (Penicillium marneffei)).